The sequence spans 141 residues: Putative nickel-responsive regulator (141 aa).

H80, H91, H93, and C99 together coordinate Ni(2+).

This sequence belongs to the transcriptional regulatory CopG/NikR family. Ni(2+) serves as cofactor.

Transcriptional regulator. This is Putative nickel-responsive regulator from Methanococcus maripaludis (strain C5 / ATCC BAA-1333).